The sequence spans 63 residues: Cytotoxin homolog S3C2 (63 aa).

4 disulfide bridges follow: Cys3-Cys22, Cys15-Cys40, Cys44-Cys55, and Cys56-Cys61.

This sequence belongs to the three-finger toxin family. Short-chain subfamily. Orphan group XVI sub-subfamily. As to expression, expressed by the venom gland.

It is found in the secreted. The polypeptide is Cytotoxin homolog S3C2 (Aspidelaps scutatus (Shield-nose snake)).